We begin with the raw amino-acid sequence, 200 residues long: FMN-dependent NADH:quinone oxidoreductase 2 (200 aa).

Residue 135-138 participates in FMN binding; the sequence is SRGG.

This sequence belongs to the azoreductase type 1 family. Homodimer. FMN is required as a cofactor.

It catalyses the reaction 2 a quinone + NADH + H(+) = 2 a 1,4-benzosemiquinone + NAD(+). The enzyme catalyses N,N-dimethyl-1,4-phenylenediamine + anthranilate + 2 NAD(+) = 2-(4-dimethylaminophenyl)diazenylbenzoate + 2 NADH + 2 H(+). Its function is as follows. Quinone reductase that provides resistance to thiol-specific stress caused by electrophilic quinones. Functionally, also exhibits azoreductase activity. Catalyzes the reductive cleavage of the azo bond in aromatic azo compounds to the corresponding amines. In Clostridium acetobutylicum (strain ATCC 824 / DSM 792 / JCM 1419 / IAM 19013 / LMG 5710 / NBRC 13948 / NRRL B-527 / VKM B-1787 / 2291 / W), this protein is FMN-dependent NADH:quinone oxidoreductase 2.